The following is a 120-amino-acid chain: Peptidyl-tRNA hydrolase (120 aa).

Belongs to the PTH2 family.

The protein localises to the cytoplasm. It catalyses the reaction an N-acyl-L-alpha-aminoacyl-tRNA + H2O = an N-acyl-L-amino acid + a tRNA + H(+). Functionally, the natural substrate for this enzyme may be peptidyl-tRNAs which drop off the ribosome during protein synthesis. This Sulfolobus acidocaldarius (strain ATCC 33909 / DSM 639 / JCM 8929 / NBRC 15157 / NCIMB 11770) protein is Peptidyl-tRNA hydrolase.